Consider the following 1134-residue polypeptide: Ankyrin repeat and SAM domain-containing protein 1A (1134 aa).

G2 is subject to N-acetylglycine. Residues G33–G55 show a composition bias toward gly residues. The interval G33–S57 is disordered. ANK repeat units follow at residues T79–V108, K112–R141, D148–M177, K181–S210, K214–Y243, and E246–I275. Residues H305 to K317 show a composition bias toward basic and acidic residues. Disordered stretches follow at residues H305–G338, S375–H422, and V469–Q498. T318 carries the post-translational modification Phosphothreonine. Residues S328–Q337 show a composition bias toward polar residues. The span at S382–E392 shows a compositional bias: basic and acidic residues. The residue at position 507 (S507) is a Phosphoserine. Positions L569–N650 are disordered. Polar residues predominate over residues L572–A588. Residues P613 to S628 show a composition bias toward basic and acidic residues. Phosphoserine occurs at positions 620, 622, 624, 626, 628, 647, 661, 663, 666, and 677. Polar residues predominate over residues C633–N650. 2 SAM domains span residues T696–V762 and N770–P837. Residues T856–G868 are compositionally biased toward polar residues. Disordered regions lie at residues T856–R896 and A1079–N1134. S887 is modified (phosphoserine). The 156-residue stretch at I936–P1091 folds into the PID domain. The span at P1123–N1134 shows a compositional bias: basic and acidic residues.

In terms of assembly, interacts (via SAM domain) with EPHA2 (via SAM domain). Interacts with EPHA8; EPHA8 kinase activity-independent but stimulated by EPHA8 ubiquitination. Interacts (via SAM domain) with EPHA6 (via SAM domain). In terms of processing, phosphorylated on tyrosine residues in response to EGF and PDGF. Widely expressed (at protein level).

The protein resides in the cytoplasm. It is found in the cell projection. Functionally, regulator of different signaling pathways. Regulates EPHA8 receptor tyrosine kinase signaling to control cell migration and neurite retraction. The polypeptide is Ankyrin repeat and SAM domain-containing protein 1A (ANKS1A) (Homo sapiens (Human)).